The following is a 290-amino-acid chain: 4-diphosphocytidyl-2-C-methyl-D-erythritol kinase (290 aa).

Lys10 is a catalytic residue. 95–105 is a binding site for ATP; sequence PVAAGLAGGSS. Asp137 is a catalytic residue.

It belongs to the GHMP kinase family. IspE subfamily.

The catalysed reaction is 4-CDP-2-C-methyl-D-erythritol + ATP = 4-CDP-2-C-methyl-D-erythritol 2-phosphate + ADP + H(+). It participates in isoprenoid biosynthesis; isopentenyl diphosphate biosynthesis via DXP pathway; isopentenyl diphosphate from 1-deoxy-D-xylulose 5-phosphate: step 3/6. Functionally, catalyzes the phosphorylation of the position 2 hydroxy group of 4-diphosphocytidyl-2C-methyl-D-erythritol. The chain is 4-diphosphocytidyl-2-C-methyl-D-erythritol kinase from Geobacillus kaustophilus (strain HTA426).